The following is a 308-amino-acid chain: tRNA pseudouridine synthase B (308 aa).

Residue Asp-47 is the Nucleophile of the active site.

The protein belongs to the pseudouridine synthase TruB family. Type 1 subfamily.

It catalyses the reaction uridine(55) in tRNA = pseudouridine(55) in tRNA. Responsible for synthesis of pseudouridine from uracil-55 in the psi GC loop of transfer RNAs. This is tRNA pseudouridine synthase B from Xanthomonas campestris pv. campestris (strain B100).